Here is a 267-residue protein sequence, read N- to C-terminus: Interleukin-2 receptor subunit alpha (267 aa).

A signal peptide spans 1–21 (MEPHLLMLGFLSFTIVPGCWA). The Sushi 1 domain maps to 22-79 (ELCLYDPPEVPNATFKALSYKNGTILNCECKRGFRRLNELVYMACLGNSWSNNCQCTS). The Extracellular segment spans residues 22–235 (ELCLYDPPEV…ETFVFTKEYQ (214 aa)). 3 disulfide bridges follow: Cys24-Cys66, Cys49-Cys75, and Cys51-Cys77. 2 N-linked (GlcNAc...) asparagine glycosylation sites follow: Asn33 and Asn43. Polar residues predominate over residues 82 to 93 (HDNSREQVTPQP). The interval 82–108 (HDNSREQVTPQPEGQKEQQTTDTQKST) is disordered. Low complexity predominate over residues 98 to 108 (EQQTTDTQKST). Positions 118–181 (GHCREPPPWR…WTHPQLTCVD (64 aa)) constitute a Sushi 2 domain. Cystine bridges form between Cys120–Cys163 and Cys147–Cys179. The disordered stretch occupies residues 191 to 215 (SEESQGSRNSFPESEASCPTPNTDF). Residues 192–215 (EESQGSRNSFPESEASCPTPNTDF) are compositionally biased toward polar residues. The helical transmembrane segment at 236-256 (VAVASCIFLLLSILLLSGFTW) threads the bilayer. At 257-267 (QHRWRKSRRTI) the chain is on the cytoplasmic side.

Non-covalent dimer of an alpha and a beta subunit. IL2R exists in 3 different forms: a high affinity dimer, an intermediate affinity monomer (beta subunit), and a low affinity monomer (alpha subunit). The high and intermediate affinity forms also associate with a gamma subunit.

It is found in the membrane. Receptor for interleukin-2. The receptor is involved in the regulation of immune tolerance by controlling regulatory T cells (TREGs) activity. TREGs suppress the activation and expansion of autoreactive T-cells. The polypeptide is Interleukin-2 receptor subunit alpha (Il2ra) (Rattus norvegicus (Rat)).